The following is a 100-amino-acid chain: MRALTLLALLALAALCIAGQAGAKPSGAESSKGAAFVSKQEGSEVVKRPRRYLYQWLGAPVPYPDTLEPRREVCELNPDCDELADHIGFQEAYRRFYGPV.

Residues 1–23 form the signal peptide; that stretch reads MRALTLLALLALAALCIAGQAGA. A propeptide spanning residues 24-51 is cleaved from the precursor; sequence KPSGAESSKGAAFVSKQEGSEVVKRPRR. The 47-residue stretch at 52 to 98 folds into the Gla domain; that stretch reads YLYQWLGAPVPYPDTLEPRREVCELNPDCDELADHIGFQEAYRRFYG. Residues Glu68, Glu72, Glu75, and Asp81 each coordinate Ca(2+). 4-carboxyglutamate is present on residues Glu68, Glu72, and Glu75. A disulfide bond links Cys74 and Cys80.

It belongs to the osteocalcin/matrix Gla protein family. Post-translationally, gamma-carboxyglutamate residues are formed by vitamin K dependent carboxylation by GGCX. These residues are essential for the binding of calcium. Decarboxylation promotes the hormone activity.

Its subcellular location is the secreted. In terms of biological role, the carboxylated form is one of the main organic components of the bone matrix, which constitutes 1-2% of the total bone protein: it acts as a negative regulator of bone formation and is required to limit bone formation without impairing bone resorption or mineralization. The carboxylated form binds strongly to apatite and calcium. Its function is as follows. The uncarboxylated form acts as a hormone secreted by osteoblasts, which regulates different cellular processes, such as energy metabolism, male fertility and brain development. Regulates of energy metabolism by acting as a hormone favoring pancreatic beta-cell proliferation, insulin secretion and sensitivity and energy expenditure. Uncarboxylated osteocalcin hormone also promotes testosterone production in the testes: acts as a ligand for G protein-coupled receptor GPRC6A at the surface of Leydig cells, initiating a signaling response that promotes the expression of enzymes required for testosterone synthesis in a CREB-dependent manner. Also acts as a regulator of brain development: osteocalcin hormone crosses the blood-brain barrier and acts as a ligand for GPR158 on neurons, initiating a signaling response that prevents neuronal apoptosis in the hippocampus, favors the synthesis of all monoamine neurotransmitters and inhibits that of gamma-aminobutyric acid (GABA). Osteocalcin also crosses the placenta during pregnancy and maternal osteocalcin is required for fetal brain development. The protein is Osteocalcin of Pan troglodytes (Chimpanzee).